The chain runs to 439 residues: MSVVAIVGRPNVGKSTLFNRILGTRRAIVEDYPGVTRDRNYAQVTRYGTPFVLIDTGGFEPASQNRLLKQMREQSELAVEEADVILFVVDAKEGLTPSDDEVAGMLRRSGKPVLYVVNKVDGDSHEAAASEFYALGVDQLYTVSAEHGRGMDDLMAAVLAALPAPAKLDARSCEETRLAVIGRPNVGKSSLINRMIGVERLVANPTAGTTRDSIDTPFVYNKKSYVLIDTAGIRRKGRVQQKLEKYSVIQSLKAMERAHVVLVVIDAEEGVTEQDLTVAGYALERGRAVLLVVNKWDLVTKDHGTMKQYTEKVRHAFKFLPFAPIIFVSALSGQRVSKIMAEVEKVAIEFNRQVPTGVLNRVLEEAVLSHAPPMVQGKRLKFYYMTQTGVRPPSFVVFGNRATGVHFSYERYLSNKLREAFGFSGCPIRLKFKDRNARE.

2 EngA-type G domains span residues 2-166 (SVVA…PAPA) and 176-351 (TRLA…IEFN). Residues 8-15 (GRPNVGKS), 55-59 (DTGGF), 118-121 (NKVD), 182-189 (GRPNVGKS), 229-233 (DTAGI), and 294-297 (NKWD) each bind GTP. Positions 352-436 (RQVPTGVLNR…PIRLKFKDRN (85 aa)) constitute a KH-like domain.

Belongs to the TRAFAC class TrmE-Era-EngA-EngB-Septin-like GTPase superfamily. EngA (Der) GTPase family. Associates with the 50S ribosomal subunit.

GTPase that plays an essential role in the late steps of ribosome biogenesis. The protein is GTPase Der of Syntrophotalea carbinolica (strain DSM 2380 / NBRC 103641 / GraBd1) (Pelobacter carbinolicus).